Reading from the N-terminus, the 264-residue chain is Thymidylate synthase (264 aa).

DUMP-binding positions include Arg-21 and 126–127 (RR). Cys-146 acts as the Nucleophile in catalysis. DUMP is bound by residues 166-169 (RSAD), Asn-177, and 207-209 (HLY). Asp-169 is a (6R)-5,10-methylene-5,6,7,8-tetrahydrofolate binding site. Ala-263 is a (6R)-5,10-methylene-5,6,7,8-tetrahydrofolate binding site.

Belongs to the thymidylate synthase family. Bacterial-type ThyA subfamily. As to quaternary structure, homodimer.

The protein resides in the cytoplasm. It catalyses the reaction dUMP + (6R)-5,10-methylene-5,6,7,8-tetrahydrofolate = 7,8-dihydrofolate + dTMP. Its pathway is pyrimidine metabolism; dTTP biosynthesis. Its function is as follows. Catalyzes the reductive methylation of 2'-deoxyuridine-5'-monophosphate (dUMP) to 2'-deoxythymidine-5'-monophosphate (dTMP) while utilizing 5,10-methylenetetrahydrofolate (mTHF) as the methyl donor and reductant in the reaction, yielding dihydrofolate (DHF) as a by-product. This enzymatic reaction provides an intracellular de novo source of dTMP, an essential precursor for DNA biosynthesis. The protein is Thymidylate synthase of Bradyrhizobium sp. (strain ORS 278).